Consider the following 142-residue polypeptide: Hemoglobin subunit alpha (142 aa).

N-acetylserine is present on serine 1. One can recognise a Globin domain in the interval serine 1–arginine 142. Histidine 59 contributes to the O2 binding site. Histidine 88 contributes to the heme b binding site.

Belongs to the globin family. Hb1 is a heterotetramer of two alpha chains and two beta-1 chains, while Hb2 is a heterotetramer of two alpha chains and two beta-2 chains. As to expression, red blood cells.

Functionally, involved in oxygen transport from gills to the various peripheral tissues. The polypeptide is Hemoglobin subunit alpha (hba) (Cygnodraco mawsoni (Antarctic dragonfish)).